A 374-amino-acid chain; its full sequence is Ribosomal RNA large subunit methyltransferase M (374 aa).

S-adenosyl-L-methionine is bound by residues Ser188, 221–224 (CPGG), Asp240, Asp260, and Asp276. Lys305 serves as the catalytic Proton acceptor.

This sequence belongs to the class I-like SAM-binding methyltransferase superfamily. RNA methyltransferase RlmE family. RlmM subfamily. As to quaternary structure, monomer.

The protein localises to the cytoplasm. The catalysed reaction is cytidine(2498) in 23S rRNA + S-adenosyl-L-methionine = 2'-O-methylcytidine(2498) in 23S rRNA + S-adenosyl-L-homocysteine + H(+). Functionally, catalyzes the 2'-O-methylation at nucleotide C2498 in 23S rRNA. The chain is Ribosomal RNA large subunit methyltransferase M from Edwardsiella ictaluri (strain 93-146).